A 522-amino-acid polypeptide reads, in one-letter code: Cytochrome P450 4e5, mitochondrial (522 aa).

Positions 307 and 443 each coordinate heme.

This sequence belongs to the cytochrome P450 family. The cofactor is heme.

Its subcellular location is the mitochondrion. Probably involved in steroid hormones biosynthesis. The polypeptide is Cytochrome P450 4e5, mitochondrial (Cyp4e5) (Drosophila mettleri (Fruit fly)).